The following is a 633-amino-acid chain: Biosynthetic arginine decarboxylase (633 aa).

Residue Lys101 is modified to N6-(pyridoxal phosphate)lysine. Residue 284–294 (VDVGGGLGVDY) participates in substrate binding.

The protein belongs to the Orn/Lys/Arg decarboxylase class-II family. SpeA subfamily. Requires Mg(2+) as cofactor. Pyridoxal 5'-phosphate is required as a cofactor.

The catalysed reaction is L-arginine + H(+) = agmatine + CO2. The protein operates within amine and polyamine biosynthesis; agmatine biosynthesis; agmatine from L-arginine: step 1/1. Functionally, catalyzes the biosynthesis of agmatine from arginine. This is Biosynthetic arginine decarboxylase from Aeromonas salmonicida (strain A449).